Consider the following 159-residue polypeptide: Growth arrest and DNA damage-inducible protein GADD45 gamma (159 aa).

The interval 43-86 is homodimerization; sequence VYESAKVLNVDPDNVTFCVLAADEEDEGDIALQIHFTLIQAFCC.

This sequence belongs to the GADD45 family. As to quaternary structure, undergoes concentration-dependent homodimerization, which is required for growth inhibititory activity and enhances interaction with PCNA. Interacts with GADD45GIP1. Interacts with PCNA.

Functionally, involved in the regulation of growth and apoptosis. Mediates activation of stress-responsive MTK1/MEKK4 MAPKKK. This is Growth arrest and DNA damage-inducible protein GADD45 gamma (Gadd45g) from Rattus norvegicus (Rat).